A 117-amino-acid polypeptide reads, in one-letter code: Cuticle protein CP1243 (117 aa).

A run of 4 repeats spans residues 1-17 (NYGE…LVQF), 26-43 (AEIG…HVQF), 67-84 (QPYG…NRQF), and 93-110 (VLVG…NVQF).

As to expression, calcified shell.

The chain is Cuticle protein CP1243 from Cancer pagurus (Rock crab).